A 492-amino-acid polypeptide reads, in one-letter code: Cytochrome P450 2A1 (492 aa).

Phosphoserine is present on S130. C437 serves as a coordination point for heme.

Belongs to the cytochrome P450 family. It depends on heme as a cofactor. In terms of tissue distribution, liver and testis.

The protein localises to the endoplasmic reticulum membrane. The protein resides in the microsome membrane. It carries out the reaction an organic molecule + reduced [NADPH--hemoprotein reductase] + O2 = an alcohol + oxidized [NADPH--hemoprotein reductase] + H2O + H(+). Its function is as follows. Highly active in the 7-alpha-hydroxylation of testosterone, progesterone and androstenedione. This is Cytochrome P450 2A1 (Cyp2a1) from Rattus norvegicus (Rat).